We begin with the raw amino-acid sequence, 311 residues long: MDILLANPRGFCAGVDRAISIVESALEKFGAPIYVRHEVVHNRYVVNKLKEAGAVFVEELDEVPDDSIVIFSAHGVAKTVREMAKSRALKVFDATCPLVTKVHMEVHRASRKGSEAVLIGHAGHPEVIGTMGQYENREGGMYLVETPDDVARLKVKNPDDLCFVTQTTLSVDETSDVIDALRKQFPKIQGPRKDDICYATQNRQDAVREMAGLVDVMLVVGSRNSSNSNRLRELAEKVGSKAYLIDDASMIETVWLEGVKAIGVTAGASAPDVLVQNVIARLRELGGNMVVEHPGREENVVFEVPPELRII.

C12 is a [4Fe-4S] cluster binding site. Residues H41 and H74 each coordinate (2E)-4-hydroxy-3-methylbut-2-enyl diphosphate. The dimethylallyl diphosphate site is built by H41 and H74. The isopentenyl diphosphate site is built by H41 and H74. C96 lines the [4Fe-4S] cluster pocket. H124 contacts (2E)-4-hydroxy-3-methylbut-2-enyl diphosphate. Position 124 (H124) interacts with dimethylallyl diphosphate. Residue H124 coordinates isopentenyl diphosphate. Catalysis depends on E126, which acts as the Proton donor. T167 contacts (2E)-4-hydroxy-3-methylbut-2-enyl diphosphate. Residue C197 coordinates [4Fe-4S] cluster. (2E)-4-hydroxy-3-methylbut-2-enyl diphosphate-binding residues include S225, S226, N227, and S269. The dimethylallyl diphosphate site is built by S225, S226, N227, and S269. The isopentenyl diphosphate site is built by S225, S226, N227, and S269.

This sequence belongs to the IspH family. [4Fe-4S] cluster serves as cofactor.

The catalysed reaction is isopentenyl diphosphate + 2 oxidized [2Fe-2S]-[ferredoxin] + H2O = (2E)-4-hydroxy-3-methylbut-2-enyl diphosphate + 2 reduced [2Fe-2S]-[ferredoxin] + 2 H(+). It catalyses the reaction dimethylallyl diphosphate + 2 oxidized [2Fe-2S]-[ferredoxin] + H2O = (2E)-4-hydroxy-3-methylbut-2-enyl diphosphate + 2 reduced [2Fe-2S]-[ferredoxin] + 2 H(+). Its pathway is isoprenoid biosynthesis; dimethylallyl diphosphate biosynthesis; dimethylallyl diphosphate from (2E)-4-hydroxy-3-methylbutenyl diphosphate: step 1/1. It functions in the pathway isoprenoid biosynthesis; isopentenyl diphosphate biosynthesis via DXP pathway; isopentenyl diphosphate from 1-deoxy-D-xylulose 5-phosphate: step 6/6. Its function is as follows. Catalyzes the conversion of 1-hydroxy-2-methyl-2-(E)-butenyl 4-diphosphate (HMBPP) into a mixture of isopentenyl diphosphate (IPP) and dimethylallyl diphosphate (DMAPP). Acts in the terminal step of the DOXP/MEP pathway for isoprenoid precursor biosynthesis. This Aeromonas salmonicida (strain A449) protein is 4-hydroxy-3-methylbut-2-enyl diphosphate reductase.